A 272-amino-acid polypeptide reads, in one-letter code: Putative MgpC-like protein MPN_102 (272 aa).

It belongs to the MgpC family.

This chain is Putative MgpC-like protein MPN_102, found in Mycoplasma pneumoniae (strain ATCC 29342 / M129 / Subtype 1) (Mycoplasmoides pneumoniae).